Reading from the N-terminus, the 416-residue chain is Peptide chain release factor subunit 1 (416 aa).

The protein belongs to the eukaryotic release factor 1 family. As to quaternary structure, heterodimer of two subunits, one of which binds GTP.

Its subcellular location is the cytoplasm. Directs the termination of nascent peptide synthesis (translation) in response to the termination codons UAA, UAG and UGA. The chain is Peptide chain release factor subunit 1 from Halobacterium salinarum (strain ATCC 29341 / DSM 671 / R1).